Reading from the N-terminus, the 427-residue chain is Hydroxylamine reductase (427 aa).

Positions 3, 6, 15, and 21 each coordinate [4Fe-4S] cluster. His-129, Glu-153, Cys-197, Cys-283, Cys-311, Cys-336, Glu-370, and Lys-372 together coordinate hybrid [4Fe-2O-2S] cluster. Cys-283 carries the cysteine persulfide modification.

It belongs to the HCP family. It depends on [4Fe-4S] cluster as a cofactor. Hybrid [4Fe-2O-2S] cluster serves as cofactor.

The protein resides in the cytoplasm. It carries out the reaction A + NH4(+) + H2O = hydroxylamine + AH2 + H(+). Catalyzes the reduction of hydroxylamine to form NH(3) and H(2)O. This Methanothermobacter thermautotrophicus (strain ATCC 29096 / DSM 1053 / JCM 10044 / NBRC 100330 / Delta H) (Methanobacterium thermoautotrophicum) protein is Hydroxylamine reductase.